The chain runs to 474 residues: Ribulose bisphosphate carboxylase large chain (474 aa).

The residue at position 2 (Pro2) is an N-acetylproline. The residue at position 13 (Lys13) is an N6,N6,N6-trimethyllysine. Substrate-binding residues include Asn122 and Thr172. Lys174 acts as the Proton acceptor in catalysis. Lys176 contributes to the substrate binding site. 3 residues coordinate Mg(2+): Lys200, Asp202, and Glu203. At Lys200 the chain carries N6-carboxylysine. His293 (proton acceptor) is an active-site residue. Residues Arg294, His326, and Ser378 each coordinate substrate.

The protein belongs to the RuBisCO large chain family. Type I subfamily. As to quaternary structure, heterohexadecamer of 8 large chains and 8 small chains; disulfide-linked. The disulfide link is formed within the large subunit homodimers. It depends on Mg(2+) as a cofactor. The disulfide bond which can form in the large chain dimeric partners within the hexadecamer appears to be associated with oxidative stress and protein turnover.

Its subcellular location is the plastid. The protein resides in the chloroplast. It catalyses the reaction 2 (2R)-3-phosphoglycerate + 2 H(+) = D-ribulose 1,5-bisphosphate + CO2 + H2O. The enzyme catalyses D-ribulose 1,5-bisphosphate + O2 = 2-phosphoglycolate + (2R)-3-phosphoglycerate + 2 H(+). RuBisCO catalyzes two reactions: the carboxylation of D-ribulose 1,5-bisphosphate, the primary event in carbon dioxide fixation, as well as the oxidative fragmentation of the pentose substrate in the photorespiration process. Both reactions occur simultaneously and in competition at the same active site. This Oltmannsiellopsis viridis (Marine flagellate) protein is Ribulose bisphosphate carboxylase large chain.